A 319-amino-acid polypeptide reads, in one-letter code: Putative G-protein coupled receptor B0244.7 (319 aa).

Residue N28 is glycosylated (N-linked (GlcNAc...) asparagine). Transmembrane regions (helical) follow at residues 49–69 (AIFIIPCCMSFFALFLNIYIF), 107–127 (LPVIIFLTHFNFWVIALFIIF), 131–151 (SFLSFIGGMVGTTLTIYIAVV), 166–186 (VLLILLLWVSAITVAISCGIV), 206–226 (GPVLIFGIVCIATAFSICLVI), and 261–281 (LFAGFFVFATMAIFEIASAII).

This sequence belongs to the G-protein coupled receptor 1 family. B0244 subfamily.

The protein resides in the cell membrane. This Caenorhabditis elegans protein is Putative G-protein coupled receptor B0244.7.